Here is a 357-residue protein sequence, read N- to C-terminus: sn-glycerol-3-phosphate import ATP-binding protein UgpC (357 aa).

The ABC transporter domain maps to 4–235 (LKLQAVTKSY…PASLFVASFI (232 aa)). ATP is bound at residue 37–44 (GPSGCGKS).

Belongs to the ABC transporter superfamily. sn-glycerol-3-phosphate importer (TC 3.A.1.1.3) family. In terms of assembly, the complex is composed of two ATP-binding proteins (UgpC), two transmembrane proteins (UgpA and UgpE) and a solute-binding protein (UgpB).

It localises to the cell inner membrane. The catalysed reaction is sn-glycerol 3-phosphate(out) + ATP + H2O = sn-glycerol 3-phosphate(in) + ADP + phosphate + H(+). Part of the ABC transporter complex UgpBAEC involved in sn-glycerol-3-phosphate (G3P) import. Responsible for energy coupling to the transport system. This chain is sn-glycerol-3-phosphate import ATP-binding protein UgpC, found in Yersinia pestis bv. Antiqua (strain Antiqua).